A 671-amino-acid polypeptide reads, in one-letter code: ABC transporter ATP-binding protein/permease wht-1 (671 aa).

At 1-408 the chain is on the cytoplasmic side; that stretch reads MHKAPISTLI…SWLTVIRDPN (408 aa). Residues 64-310 enclose the ABC transporter domain; it reads TNFVDRFRNN…FEKCGYPCPA (247 aa). 100–107 is an ATP binding site; sequence GSSGAGKT. A helical membrane pass occupies residues 409-429; the sequence is LLSVRLLQILITAFITGIVFF. Topologically, residues 430–451 are extracellular; that stretch reads QTPVTPATIISINGIMFNHIRN. Residues 452–472 form a helical membrane-spanning segment; that stretch reads MNFMLQFPNVPVITAELPIVL. Residues 473-497 lie on the Cytoplasmic side of the membrane; that stretch reads RENANGVYRTSAYFLAKNIAELPQY. Residues 498–518 form a helical membrane-spanning segment; that stretch reads IILPILYNTIVYWMSGLYPNF. The Extracellular segment spans residues 519-525; sequence WNYCFAS. A helical membrane pass occupies residues 526 to 546; that stretch reads LVTILITNVAISISYAVATIF. Residues 547-550 are Cytoplasmic-facing; the sequence is ANTD. A helical transmembrane segment spans residues 551 to 571; that stretch reads VAMTILPIFVVPIMAFGGFFI. The Extracellular segment spans residues 572–644; the sequence is TFDAIPSYFK…DFSASHKIFD (73 aa). The chain crosses the membrane as a helical span at residues 645–665; sequence ISILFGMFIGIRIIAYVALLI. Residues 666-671 lie on the Cytoplasmic side of the membrane; it reads RSYNNT.

It belongs to the ABC transporter superfamily. ABCG family. Eye pigment precursor importer (TC 3.A.1.204) subfamily. Expressed in the intestine in both larvae and adults. Expressed in the gut of males.

It is found in the membrane. Functionally, required for efficient RNA interference (RNAi). Plays a role in germline development. In Caenorhabditis elegans, this protein is ABC transporter ATP-binding protein/permease wht-1.